A 285-amino-acid polypeptide reads, in one-letter code: Secreted alkaline triacylglycerol lipase (285 aa).

Positions 1-20 (MLFNYQSLLVGVSLISQALS) are cleaved as a signal peptide. S159 (nucleophile) is an active-site residue. Active-site charge relay system residues include D215 and H268.

It belongs to the AB hydrolase superfamily. FaeA family.

It is found in the secreted. It catalyses the reaction a triacylglycerol + H2O = a diacylglycerol + a fatty acid + H(+). Functionally, secreted alkaline lipase that hydrolyzes acylglycerol lipids such as triacylglycerols and consequently releases free fatty acid. Is able to hydrolyze tributyrin (1,2,3-tributyryl-glycerin). The chain is Secreted alkaline triacylglycerol lipase from Penicillium cyclopium.